A 596-amino-acid chain; its full sequence is Protein NRT1/ PTR FAMILY 3.1 (596 aa).

Basic and acidic residues predominate over residues 1–16 (MEEQSKNKISEEEKQL). The disordered stretch occupies residues 1-23 (MEEQSKNKISEEEKQLHGRPNRP). 12 helical membrane passes run 27–47 (LITM…VVGF), 73–93 (FAGT…SFAG), 98–118 (ITFA…SAII), 137–157 (TAQL…SGGI), 185–205 (NWYY…LVWI), 213–233 (LGLG…VGGF), 334–354 (MGPI…QGTF), 372–392 (IPAG…IIFY), 416–436 (MGIG…VEVK), 453–473 (IVPI…VAEA), 497–517 (ALFW…VTLV), and 542–562 (YFYW…LWCA).

It belongs to the major facilitator superfamily. Proton-dependent oligopeptide transporter (POT/PTR) (TC 2.A.17) family. Expressed in shoots, stems, leaves, flowers and siliques.

It localises to the membrane. In terms of biological role, may act as an efflux-type nitrite transporter. Not regulated by the PII protein involved in the regulation of nitrite uptake into higher plant chloroplasts. This chain is Protein NRT1/ PTR FAMILY 3.1 (NPF3.1), found in Arabidopsis thaliana (Mouse-ear cress).